Consider the following 358-residue polypeptide: Ganglioside-induced differentiation-associated protein 1 (358 aa).

One can recognise a GST N-terminal domain in the interval 24–105 (VHLILYHWTH…YLEQTFLDER (82 aa)). Residues K50, K172, K173, K188, and K190 each participate in a glycyl lysine isopeptide (Lys-Gly) (interchain with G-Cter in ubiquitin) cross-link. The GST C-terminal domain occupies 153–309 (PAYATTRIRS…LISAVLPTAF (157 aa)). K203 carries the N6-acetyllysine; alternate modification. K203 is covalently cross-linked (Glycyl lysine isopeptide (Lys-Gly) (interchain with G-Cter in ubiquitin); alternate). Residues K206, K207, and K214 each participate in a glycyl lysine isopeptide (Lys-Gly) (interchain with G-Cter in ubiquitin) cross-link. The next 2 membrane-spanning stretches (helical) occupy residues 292–312 (VLGH…FRVA) and 320–340 (LGST…FMLF). The required for mitochondrial localization stretch occupies residues 320–358 (LGSTLVVGLLVGMGYFAFMLFRRRLGSMILALRPRPNYF).

Belongs to the GST superfamily. As to quaternary structure, homodimer. In terms of processing, ubiquitinated by PRKN during mitophagy, leading to its degradation and enhancement of mitophagy. Deubiquitinated by USP30. In terms of tissue distribution, expressed in brain, spinal cord, muscles and intestinal villi. In the central nervous system expressed most prominently in the cortex, cerebellum, thalamus, olfactory bulb, and spinal cord. Expressed also in sciatic nerves and in dorsal root ganglia.

The protein localises to the mitochondrion outer membrane. It localises to the cytoplasm. Its function is as follows. Regulates the mitochondrial network by promoting mitochondrial fission. The chain is Ganglioside-induced differentiation-associated protein 1 (Gdap1) from Mus musculus (Mouse).